The sequence spans 412 residues: UDP-galactose transporter homolog 1 (412 aa).

The helical transmembrane segment at 3–23 (VLRLAVCISGVYAAFLLWAIA) threads the bilayer. Positions 31–51 (FPSVHPHPHQQPHSPSDPPPG) are disordered. Transmembrane regions (helical) follow at residues 58 to 78 (LFLN…YLSF), 139 to 159 (LLAL…IGFL), 197 to 217 (YIVV…AETS), and 222 to 242 (GGSD…IDGL). Asn-244 is a glycosylation site (N-linked (GlcNAc...) asparagine). The next 4 membrane-spanning stretches (helical) occupy residues 262 to 282 (MMFT…VLPL), 325 to 345 (SALA…LFIF), 355 to 375 (TLVM…VVVF), and 379 to 399 (LTKG…VEAG).

The protein belongs to the nucleotide-sugar transporter family. SLC35B subfamily.

The protein localises to the endoplasmic reticulum membrane. In terms of biological role, may be involved in specific transport of UDP-Gal from the cytosol to the Golgi lumen. Involved in the maintenance of optimal conditions for the folding of secretory pathway proteins in the endoplasmic reticulum. This Cryptococcus neoformans var. neoformans serotype D (strain JEC21 / ATCC MYA-565) (Filobasidiella neoformans) protein is UDP-galactose transporter homolog 1 (HUT1-A).